The sequence spans 400 residues: Serine/threonine transporter SstT (400 aa).

The next 10 helical transmembrane spans lie at 11–31 (IGLVPLIIIGLVLGVLIGWLA), 45–65 (FVGALKAVAPILVFVLVMAAI), 81–101 (IMYMFGTFLAALTAVGASFLF), 138–158 (AIAEANYIGILAWAIIIGFAL), 175–195 (AISQVVKWVIALAPFGILGLV), 213–233 (ILMVLVGCMLFIALVVNPLII), 242–264 (YPLVFICLRESGITAFFTRSSAA), 295–315 (MAGAAITINVLTLAAAHTLGI), 327–347 (LVATISACGASGVAGGSLLLI), and 354–374 (FSIPNDIAMQVVAIGFIIGVI).

The protein belongs to the dicarboxylate/amino acid:cation symporter (DAACS) (TC 2.A.23) family.

The protein localises to the cell inner membrane. It catalyses the reaction L-serine(in) + Na(+)(in) = L-serine(out) + Na(+)(out). The enzyme catalyses L-threonine(in) + Na(+)(in) = L-threonine(out) + Na(+)(out). Its function is as follows. Involved in the import of serine and threonine into the cell, with the concomitant import of sodium (symport system). This chain is Serine/threonine transporter SstT, found in Psychrobacter cryohalolentis (strain ATCC BAA-1226 / DSM 17306 / VKM B-2378 / K5).